The sequence spans 149 residues: UPF0102 protein Bpro_0391 (149 aa).

Positions 1–30 (MWFSRKQVVKPPPDGSRAQPGQVTTKSRGD) are disordered.

Belongs to the UPF0102 family.

This is UPF0102 protein Bpro_0391 from Polaromonas sp. (strain JS666 / ATCC BAA-500).